Consider the following 525-residue polypeptide: MSL complex subunit 3 (525 aa).

The 60-residue stretch at 13-72 folds into the Tudor-knot domain; sequence SGEKVLCFEPDPTKARVLYDAKIIDVIIGKDEKGRKIPEYLIHFNGWNRSWDRWAAEEHV. Disordered regions lie at residues 119 to 148 and 302 to 383; these read KEKS…KEHR and TTTT…DTSA. The span at 136 to 146 shows a compositional bias: basic and acidic residues; it reads SCGEKNGGIKE. The region spanning 172–521 is the MRG domain; that stretch reads DERTITIDIP…CEAHYSTKNP (350 aa). A required for the histone acetyltransferase activity of the MSL complex region spans residues 294-444; sequence FFLPIKESTT…WKLVPDNYPP (151 aa). Phosphoserine is present on residues S313 and S315. Low complexity predominate over residues 320-332; it reads NPSTPQSTESQPP. 2 positions are modified to phosphoserine: S371 and S404. T409 bears the Phosphothreonine mark. Phosphoserine occurs at positions 411 and 415.

In terms of assembly, component of the MSL histone acetyltransferase complex at least composed of the KAT8/MOF, MSL1/hampin, MSL2 and MSL3. Interacts (via the MRG domain) with MSL1 and KAT8/MOF. In terms of tissue distribution, in testis, expression is mostly restricted to the spermatocyte stage and only in a small portion of spermatogonia.

The protein resides in the nucleus. In terms of biological role, non-catalytic component of the MSL histone acetyltransferase complex, a multiprotein complex that mediates the majority of histone H4 acetylation at 'Lys-16' (H4K16ac), an epigenetic mark that prevents chromatin compaction. The MSL complex is required for chromosome stability and genome integrity by maintaining homeostatic levels of H4K16ac. The MSL complex is also involved in gene dosage by promoting up-regulation of genes expressed by the X chromosome. X up-regulation is required to compensate for autosomal biallelic expression. The MSL complex also participates in gene dosage compensation by promoting expression of Tsix non-coding RNA. Acts as a histone reader that specifically recognizes and binds histone H4 monomethylated at 'Lys-20' (H4K20Me1) in a DNA-dependent manner and is proposed to be involved in chromosomal targeting of the MSL complex. May play a role X inactivation in females. This Mus musculus (Mouse) protein is MSL complex subunit 3.